Reading from the N-terminus, the 260-residue chain is Triosephosphate isomerase (260 aa).

Residue 11-13 participates in substrate binding; it reads NWK. Histidine 103 serves as the catalytic Electrophile. Glutamate 175 (proton acceptor) is an active-site residue. Substrate-binding positions include glycine 181, serine 220, and 241-242; that span reads GG.

The protein belongs to the triosephosphate isomerase family. In terms of assembly, homodimer.

The protein localises to the cytoplasm. It catalyses the reaction D-glyceraldehyde 3-phosphate = dihydroxyacetone phosphate. It participates in carbohydrate biosynthesis; gluconeogenesis. The protein operates within carbohydrate degradation; glycolysis; D-glyceraldehyde 3-phosphate from glycerone phosphate: step 1/1. Its function is as follows. Involved in the gluconeogenesis. Catalyzes stereospecifically the conversion of dihydroxyacetone phosphate (DHAP) to D-glyceraldehyde-3-phosphate (G3P). The polypeptide is Triosephosphate isomerase (Shewanella woodyi (strain ATCC 51908 / MS32)).